A 237-amino-acid chain; its full sequence is Ribosomal RNA large subunit methyltransferase E (237 aa).

Residues glycine 80, tryptophan 82, aspartate 108, aspartate 124, and aspartate 148 each coordinate S-adenosyl-L-methionine. Catalysis depends on lysine 188, which acts as the Proton acceptor.

It belongs to the class I-like SAM-binding methyltransferase superfamily. RNA methyltransferase RlmE family.

The protein localises to the cytoplasm. The catalysed reaction is uridine(2552) in 23S rRNA + S-adenosyl-L-methionine = 2'-O-methyluridine(2552) in 23S rRNA + S-adenosyl-L-homocysteine + H(+). In terms of biological role, specifically methylates the uridine in position 2552 of 23S rRNA at the 2'-O position of the ribose in the fully assembled 50S ribosomal subunit. In Jannaschia sp. (strain CCS1), this protein is Ribosomal RNA large subunit methyltransferase E.